A 972-amino-acid polypeptide reads, in one-letter code: Macrophage colony-stimulating factor 1 receptor (972 aa).

The signal sequence occupies residues 1–19 (MGPGVLLLLLVATAWHGQG). Residues 20 to 517 (IPVIEPSVPE…HPPDEFLFTP (498 aa)) are Extracellular-facing. Ig-like C2-type domains are found at residues 21 to 104 (PVIE…VKDP), 107 to 197 (PWNV…KVQK), 203 to 290 (PALT…HSTS), 299 to 399 (AYLN…LTLR), and 402 to 502 (PEVS…IPIS). Disulfide bonds link Cys-42-Cys-84, Cys-127-Cys-177, and Cys-224-Cys-278. 11 N-linked (GlcNAc...) asparagine glycosylation sites follow: Asn-45, Asn-73, Asn-153, Asn-240, Asn-275, Asn-302, Asn-335, Asn-353, Asn-412, Asn-428, and Asn-480. A disulfide bond links Cys-419 and Cys-485. The chain crosses the membrane as a helical span at residues 518-538 (VVVACMSIMALLLLLLLLLLY). The Cytoplasmic portion of the chain corresponds to 539–972 (KYKQKPKYQV…LLQPNNYQFC (434 aa)). The regulatory juxtamembrane domain stretch occupies residues 542 to 574 (QKPKYQVRWKIIESYEGNSYTFIDPTQLPYNEK). Phosphotyrosine; by autocatalysis occurs at positions 546 and 561. The 329-residue stretch at 582-910 (LQFGKTLGAG…PTFQQICSFL (329 aa)) folds into the Protein kinase domain. ATP is bound by residues 588–596 (LGAGAFGKV) and Lys-616. A phosphotyrosine; by autocatalysis mark is found at Tyr-699 and Tyr-708. Ser-713 carries the post-translational modification Phosphoserine. Position 723 is a phosphotyrosine; by autocatalysis (Tyr-723). Asp-778 (proton acceptor) is an active-site residue. Residues 796–818 (DFGLARDIMNDSNYIVKGNARLP) are activation loop. A phosphotyrosine; by autocatalysis mark is found at Tyr-809 and Tyr-923. Positions 918–950 (RRERDYTNLPSSSRSGGSGSSSSELEEESSSEH) are disordered. The span at 928-940 (SSSRSGGSGSSSS) shows a compositional bias: low complexity. At Tyr-969 the chain carries Phosphotyrosine; by autocatalysis.

Belongs to the protein kinase superfamily. Tyr protein kinase family. CSF-1/PDGF receptor subfamily. As to quaternary structure, interacts with INPPL1/SHIP2 and THOC5. Monomer. Homodimer. Interacts with CSF1 and IL34. Interaction with dimeric CSF1 or IL34 leads to receptor homodimerization. Interacts (tyrosine phosphorylated) with PLCG2 (via SH2 domain). Interacts (tyrosine phosphorylated) with PIK3R1 (via SH2 domain). Interacts (tyrosine phosphorylated) with FYN, YES1 and SRC (via SH2 domain). Interacts (tyrosine phosphorylated) with CBL, GRB2 and SLA2. In terms of processing, autophosphorylated in response to CSF1 or IL34 binding. Phosphorylation at Tyr-561 is important for normal down-regulation of signaling by ubiquitination, internalization and degradation. Phosphorylation at Tyr-561 and Tyr-809 is important for interaction with SRC family members, including FYN, YES1 and SRC, and for subsequent activation of these protein kinases. Phosphorylation at Tyr-699 and Tyr-923 is important for interaction with GRB2. Phosphorylation at Tyr-723 is important for interaction with PIK3R1. Phosphorylation at Tyr-708 is important for normal receptor degradation. Phosphorylation at Tyr-723 and Tyr-809 is important for interaction with PLCG2. Phosphorylation at Tyr-969 is important for interaction with CBL. Dephosphorylation by PTPN2 negatively regulates downstream signaling and macrophage differentiation. Ubiquitinated. Becomes rapidly polyubiquitinated after autophosphorylation, leading to its degradation. As to expression, expressed in bone marrow and in differentiated blood mononuclear cells.

It is found in the cell membrane. The catalysed reaction is L-tyrosyl-[protein] + ATP = O-phospho-L-tyrosyl-[protein] + ADP + H(+). Present in an inactive conformation in the absence of bound ligand. CSF1 or IL34 binding leads to dimerization and activation by autophosphorylation on tyrosine residues. Inhibited by imatinib/STI-571 (Gleevec), dasatinib, sunitinib/SU11248, lestaurtinib/CEP-701, midostaurin/PKC-412, Ki20227, linifanib/ABT-869, Axitinib/AG013736, sorafenib/BAY 43-9006 and GW2580. In terms of biological role, tyrosine-protein kinase that acts as a cell-surface receptor for CSF1 and IL34 and plays an essential role in the regulation of survival, proliferation and differentiation of hematopoietic precursor cells, especially mononuclear phagocytes, such as macrophages and monocytes. Promotes the release of pro-inflammatory chemokines in response to IL34 and CSF1, and thereby plays an important role in innate immunity and in inflammatory processes. Plays an important role in the regulation of osteoclast proliferation and differentiation, the regulation of bone resorption, and is required for normal bone and tooth development. Required for normal male and female fertility, and for normal development of milk ducts and acinar structures in the mammary gland during pregnancy. Promotes reorganization of the actin cytoskeleton, regulates formation of membrane ruffles, cell adhesion and cell migration, and promotes cancer cell invasion. Activates several signaling pathways in response to ligand binding, including the ERK1/2 and the JNK pathway. Phosphorylates PIK3R1, PLCG2, GRB2, SLA2 and CBL. Activation of PLCG2 leads to the production of the cellular signaling molecules diacylglycerol and inositol 1,4,5-trisphosphate, that then lead to the activation of protein kinase C family members, especially PRKCD. Phosphorylation of PIK3R1, the regulatory subunit of phosphatidylinositol 3-kinase, leads to activation of the AKT1 signaling pathway. Activated CSF1R also mediates activation of the MAP kinases MAPK1/ERK2 and/or MAPK3/ERK1, and of the SRC family kinases SRC, FYN and YES1. Activated CSF1R transmits signals both via proteins that directly interact with phosphorylated tyrosine residues in its intracellular domain, or via adapter proteins, such as GRB2. Promotes activation of STAT family members STAT3, STAT5A and/or STAT5B. Promotes tyrosine phosphorylation of SHC1 and INPP5D/SHIP-1. Receptor signaling is down-regulated by protein phosphatases, such as INPP5D/SHIP-1, that dephosphorylate the receptor and its downstream effectors, and by rapid internalization of the activated receptor. In the central nervous system, may play a role in the development of microglia macrophages. The chain is Macrophage colony-stimulating factor 1 receptor (CSF1R) from Homo sapiens (Human).